The following is a 180-amino-acid chain: Large ribosomal subunit protein uL5 (180 aa).

It belongs to the universal ribosomal protein uL5 family. In terms of assembly, part of the 50S ribosomal subunit; part of the 5S rRNA/L5/L18/L25 subcomplex. Contacts the 5S rRNA and the P site tRNA. Forms a bridge to the 30S subunit in the 70S ribosome.

This is one of the proteins that bind and probably mediate the attachment of the 5S RNA into the large ribosomal subunit, where it forms part of the central protuberance. In the 70S ribosome it contacts protein S13 of the 30S subunit (bridge B1b), connecting the 2 subunits; this bridge is implicated in subunit movement. Contacts the P site tRNA; the 5S rRNA and some of its associated proteins might help stabilize positioning of ribosome-bound tRNAs. This Xanthomonas campestris pv. campestris (strain 8004) protein is Large ribosomal subunit protein uL5.